Here is a 118-residue protein sequence, read N- to C-terminus: MTSQSQGIQQLLQAEKRAKDKLDEAKKRKGKRLRQAKEEAVAETDQYRMQMEKDFRLKQAKIMGSQSHLSDEIEEQTLEKIKELNGSYNKCMESVIKQLLSMVCDMKPEVHVNYRATN.

Polar residues predominate over residues 1 to 12; the sequence is MTSQSQGIQQLL. The tract at residues 1 to 44 is disordered; it reads MTSQSQGIQQLLQAEKRAKDKLDEAKKRKGKRLRQAKEEAVAET. Residues 5–53 are a coiled coil; sequence SQGIQQLLQAEKRAKDKLDEAKKRKGKRLRQAKEEAVAETDQYRMQMEK. Residues 14–26 are compositionally biased toward basic and acidic residues; the sequence is AEKRAKDKLDEAK.

This sequence belongs to the V-ATPase G subunit family. As to quaternary structure, V-ATPase is a heteromultimeric enzyme made up of two complexes: the ATP-hydrolytic V1 complex and the proton translocation V0 complex. The V1 complex consists of three catalytic AB heterodimers that form a heterohexamer, three peripheral stalks each consisting of EG heterodimers, one central rotor including subunits D and F, and the regulatory subunits C and H. The proton translocation complex V0 consists of the proton transport subunit a, a ring of proteolipid subunits c9c'', rotary subunit d, subunits e and f, and the accessory subunits ATP6AP1/Ac45 and ATP6AP2/PRR. Kidney.

In terms of biological role, subunit of the V1 complex of vacuolar(H+)-ATPase (V-ATPase), a multisubunit enzyme composed of a peripheral complex (V1) that hydrolyzes ATP and a membrane integral complex (V0) that translocates protons. V-ATPase is responsible for acidifying and maintaining the pH of intracellular compartments and in some cell types, is targeted to the plasma membrane, where it is responsible for acidifying the extracellular environment. In Mus musculus (Mouse), this protein is V-type proton ATPase subunit G 3 (Atp6v1g3).